The primary structure comprises 1001 residues: E3 ubiquitin-protein ligase BRE1B (1001 aa).

Residues 1–40 (MSGLSNKRAAGDGGSGPPEKKMNREEKTTTTLIEPIRLGG) are disordered. Positions 18-28 (PEKKMNREEKT) are enriched in basic and acidic residues. K20 is modified (N6-acetyllysine). Position 42 is a phosphoserine (S42). Positions 55–91 (KNKKLAERLEQRQACEDELRERIEKLEKRQATDDATL) form a coiled coil. The segment at 122–142 (TEVPGCQEGLTRDVIPRPDPG) is disordered. 2 coiled-coil regions span residues 189–377 (KAAV…LRSL) and 437–525 (LQKK…ASGS). N6-acetyllysine is present on residues K355 and K517. The tract at residues 519–647 (RAQASGSSHC…KAKVEEAKRK (129 aa)) is disordered. Positions 565-576 (ALLAGATSATSS) are enriched in low complexity. Glycyl lysine isopeptide (Lys-Gly) (interchain with G-Cter in SUMO2) cross-links involve residues K578 and K579. A phosphoserine mark is found at S584 and S585. Basic and acidic residues-rich tracts occupy residues 602-619 (RGRE…EREG) and 633-647 (RADR…AKRK). The stretch at 627-946 (AASTLSRADR…EEIKEYKARL (320 aa)) forms a coiled coil. The RING-type zinc finger occupies 948–987 (CPCCNTRKKDAVLTKCFHVFCFECVRGRYEARQRKCPKCN).

It belongs to the BRE1 family. Component of the RNF20/40 complex (also known as BRE1 complex) probably composed of 2 copies of RNF20/BRE1A and 2 copies of RNF40/BRE1B. Interacts with UBE2E1/UBCH6. Interacts with RB1 and WAC.

The protein localises to the nucleus. The enzyme catalyses S-ubiquitinyl-[E2 ubiquitin-conjugating enzyme]-L-cysteine + [acceptor protein]-L-lysine = [E2 ubiquitin-conjugating enzyme]-L-cysteine + N(6)-ubiquitinyl-[acceptor protein]-L-lysine.. It participates in protein modification; protein ubiquitination. Its function is as follows. Component of the RNF20/40 E3 ubiquitin-protein ligase complex that mediates monoubiquitination of 'Lys-120' of histone H2B (H2BK120ub1). H2BK120ub1 gives a specific tag for epigenetic transcriptional activation and is also prerequisite for histone H3 'Lys-4' and 'Lys-79' methylation (H3K4me and H3K79me, respectively). It thereby plays a central role in histone code and gene regulation. The RNF20/40 complex forms a H2B ubiquitin ligase complex in cooperation with the E2 enzyme UBE2A or UBE2B; reports about the cooperation with UBE2E1/UBCH are contradictory. Required for transcriptional activation of Hox genes. In Mus musculus (Mouse), this protein is E3 ubiquitin-protein ligase BRE1B (Rnf40).